Consider the following 466-residue polypeptide: FBD-associated F-box protein At5g22730 (466 aa).

The 54-residue stretch at 27 to 80 (EDLISKLPDSLITQILLYLPIKDIVRTSSLSSRWKSLWLLIPRLDLDSEEFQDY) folds into the F-box domain. Residues 385–436 (DEPIIFSSVPRCLVSSLESVEIKKFNGRPAKMEVARYFLENSGVLQKLVLHL) enclose the FBD domain.

The protein is FBD-associated F-box protein At5g22730 of Arabidopsis thaliana (Mouse-ear cress).